Consider the following 550-residue polypeptide: Hydroxylamine reductase (550 aa).

[2Fe-2S] cluster-binding residues include cysteine 3, cysteine 6, cysteine 18, and cysteine 25. Residues histidine 249, glutamate 273, cysteine 317, cysteine 405, cysteine 433, cysteine 458, glutamate 492, and lysine 494 each coordinate hybrid [4Fe-2O-2S] cluster. Cysteine persulfide is present on cysteine 405.

The protein belongs to the HCP family. Requires [2Fe-2S] cluster as cofactor. Hybrid [4Fe-2O-2S] cluster is required as a cofactor.

The protein localises to the cytoplasm. It catalyses the reaction A + NH4(+) + H2O = hydroxylamine + AH2 + H(+). Functionally, catalyzes the reduction of hydroxylamine to form NH(3) and H(2)O. This is Hydroxylamine reductase from Shigella flexneri serotype 5b (strain 8401).